We begin with the raw amino-acid sequence, 356 residues long: Tyrosine recombinase XerS (356 aa).

The Core-binding (CB) domain occupies 16 to 121; it reads LMPWYVLEYY…ALSSLYKYLT (106 aa). A Tyr recombinase domain is found at 169–354; that stretch reads EFLEYVDCEY…VNDEQKNALD (186 aa). Residues R210, K234, H306, R309, and H332 contribute to the active site. The O-(3'-phospho-DNA)-tyrosine intermediate role is filled by Y341.

The protein belongs to the 'phage' integrase family. XerS subfamily.

Its subcellular location is the cytoplasm. With respect to regulation, ftsK is required for recombination. Site-specific tyrosine recombinase, which acts by catalyzing the cutting and rejoining of the recombining DNA molecules. Essential to convert dimers of the bacterial chromosome into monomers to permit their segregation at cell division. This is Tyrosine recombinase XerS from Streptococcus mutans serotype c (strain ATCC 700610 / UA159).